We begin with the raw amino-acid sequence, 271 residues long: GATA transcription factor 19 (271 aa).

The segment at 1–23 (MAAEPPADGRDPPADDGAAGDGA) is disordered. The region spanning 33-68 (LSAASEQLTLVYQGEVYVFDPVPPQKVQAVLLVLGG) is the Tify domain. The region spanning 95–137 (RIASLMRFREKRKERCFDKKIRYSVRKEVAQKMKRRKGQFAGR) is the CCT domain. The segment at 166-193 (CQNCGISSRLTPAMRRGPAGPRSLCNAC) adopts a GATA-type zinc-finger fold. The disordered stretch occupies residues 238–271 (NQTTMKTDTEMVPEQEQKADVLPPTKEEDSMATS). Basic and acidic residues predominate over residues 252–271 (QEQKADVLPPTKEEDSMATS).

The protein belongs to the type IV zinc-finger family. Class C subfamily.

The protein localises to the nucleus. Its function is as follows. Transcriptional activator that specifically binds 5'-GATA-3' or 5'-GAT-3' motifs within gene promoters. In Oryza sativa subsp. indica (Rice), this protein is GATA transcription factor 19.